Here is a 306-residue protein sequence, read N- to C-terminus: Dermonecrotic toxin LiSicTox-alphaIA1bi (306 aa).

The first 18 residues, Met1–Ala18, serve as a signal peptide directing secretion. The propeptide occupies Ala19–Arg26. His38 is an active-site residue. The Mg(2+) site is built by Glu58 and Asp60. The active-site Nucleophile is His74. 2 disulfide bridges follow: Cys78–Cys84 and Cys80–Cys223. Asp118 serves as a coordination point for Mg(2+).

The protein belongs to the arthropod phospholipase D family. Class II subfamily. Class IIa sub-subfamily. Requires Mg(2+) as cofactor. Expressed by the venom gland.

The protein localises to the secreted. The catalysed reaction is an N-(acyl)-sphingosylphosphocholine = an N-(acyl)-sphingosyl-1,3-cyclic phosphate + choline. It catalyses the reaction an N-(acyl)-sphingosylphosphoethanolamine = an N-(acyl)-sphingosyl-1,3-cyclic phosphate + ethanolamine. The enzyme catalyses a 1-acyl-sn-glycero-3-phosphocholine = a 1-acyl-sn-glycero-2,3-cyclic phosphate + choline. It carries out the reaction a 1-acyl-sn-glycero-3-phosphoethanolamine = a 1-acyl-sn-glycero-2,3-cyclic phosphate + ethanolamine. Its function is as follows. Dermonecrotic toxins cleave the phosphodiester linkage between the phosphate and headgroup of certain phospholipids (sphingolipid and lysolipid substrates), forming an alcohol (often choline) and a cyclic phosphate. This toxin acts on sphingomyelin (SM). The level of enzymatic activity is high according to Tambourgi and colleagues or low according to Felicori and colleagues. It may also act on ceramide phosphoethanolamine (CPE), lysophosphatidylcholine (LPC) and lysophosphatidylethanolamine (LPE), but not on lysophosphatidylserine (LPS), and lysophosphatidylglycerol (LPG). It acts by transphosphatidylation, releasing exclusively cyclic phosphate products as second products. It induces complement-dependent hemolysis, dermonecrosis, vascular permeability and platelet aggregation. Both C5a and the membrane attack complex may play a role in the induction of dermonecrosis. MMP-9 and MMP-2 produced by skin fibroblasts can also contribute to proteolytic tissue destruction. In Loxosceles intermedia (Brown spider), this protein is Dermonecrotic toxin LiSicTox-alphaIA1bi.